We begin with the raw amino-acid sequence, 62 residues long: Large ribosomal subunit protein eL24 (62 aa).

Cys7, Cys10, Cys33, and Cys37 together coordinate Zn(2+). Residues 7-37 form a C4-type zinc finger; it reads CSFCGKDILPGTGLMYVRNDGSLLWFCSSKC.

This sequence belongs to the eukaryotic ribosomal protein eL24 family. In terms of assembly, part of the 50S ribosomal subunit. Forms a cluster with proteins L3 and L14. Zn(2+) is required as a cofactor.

Binds to the 23S rRNA. In Sulfolobus acidocaldarius (strain ATCC 33909 / DSM 639 / JCM 8929 / NBRC 15157 / NCIMB 11770), this protein is Large ribosomal subunit protein eL24.